A 336-amino-acid polypeptide reads, in one-letter code: Tryptophan--tRNA ligase (336 aa).

ATP-binding positions include 13 to 15 (QPS) and 21 to 22 (GN). The 'HIGH' region signature appears at 14-22 (PSGNLTIGN). L-tryptophan is bound at residue aspartate 140. ATP contacts are provided by residues 152-154 (GQD), isoleucine 191, and 200-204 (KMSKS). Positions 200 to 204 (KMSKS) match the 'KMSKS' region motif.

Belongs to the class-I aminoacyl-tRNA synthetase family. Homodimer.

The protein localises to the cytoplasm. It catalyses the reaction tRNA(Trp) + L-tryptophan + ATP = L-tryptophyl-tRNA(Trp) + AMP + diphosphate + H(+). In terms of biological role, catalyzes the attachment of tryptophan to tRNA(Trp). This Buchnera aphidicola subsp. Schizaphis graminum (strain Sg) protein is Tryptophan--tRNA ligase.